We begin with the raw amino-acid sequence, 517 residues long: Ribonuclease Y (517 aa).

The chain crosses the membrane as a helical span at residues 1-21; sequence MIEVVVGIGAGLIGIGAGYLV. Positions 207–273 constitute a KH domain; it reads LINVVNIKND…TRVIELLVED (67 aa). Residues 333-426 form the HD domain; that stretch reads ALAHSLEVAH…VCAADALSAA (94 aa).

This sequence belongs to the RNase Y family.

It is found in the cell membrane. Its function is as follows. Endoribonuclease that initiates mRNA decay. The chain is Ribonuclease Y from Campylobacter fetus subsp. fetus (strain 82-40).